The sequence spans 120 residues: ATP-dependent Clp protease adapter protein ClpS (120 aa).

It belongs to the ClpS family. In terms of assembly, binds to the N-terminal domain of the chaperone ClpA.

In terms of biological role, involved in the modulation of the specificity of the ClpAP-mediated ATP-dependent protein degradation. The polypeptide is ATP-dependent Clp protease adapter protein ClpS (Pseudomonas syringae pv. syringae (strain B728a)).